The sequence spans 596 residues: Arginine--tRNA ligase (596 aa).

The 'HIGH' region motif lies at 135–145 (ANPTGPIHIGG). The tract at residues 227-249 (PRVDGGADQDGNPLGEGDSEQRE) is disordered.

Belongs to the class-I aminoacyl-tRNA synthetase family. In terms of assembly, monomer.

It is found in the cytoplasm. It catalyses the reaction tRNA(Arg) + L-arginine + ATP = L-arginyl-tRNA(Arg) + AMP + diphosphate. This is Arginine--tRNA ligase from Bifidobacterium adolescentis (strain ATCC 15703 / DSM 20083 / NCTC 11814 / E194a).